The sequence spans 189 residues: Prophage DNA-packing protein NohA (189 aa).

Belongs to the terminase small subunit family.

This is Prophage DNA-packing protein NohA (nohA) from Escherichia coli (strain K12).